The chain runs to 177 residues: Large ribosomal subunit protein uL6 (177 aa).

It belongs to the universal ribosomal protein uL6 family. Part of the 50S ribosomal subunit.

Its function is as follows. This protein binds to the 23S rRNA, and is important in its secondary structure. It is located near the subunit interface in the base of the L7/L12 stalk, and near the tRNA binding site of the peptidyltransferase center. The protein is Large ribosomal subunit protein uL6 of Vibrio cholerae serotype O1 (strain ATCC 39315 / El Tor Inaba N16961).